We begin with the raw amino-acid sequence, 282 residues long: MAGAGLIGIRRRIKSVTNIRKITKAMGLVSTAKLRKARVNLEINKKYYNEYKVILKDIINFIEDSNIYIDGNGSHKKLYVIFTSDSGLCGSFNINIINNVINEIKEDKENSLVIVIGQKGRMYLKKLGINTLAEYIEIPDVPTTKEARTIAKNIIKLYSSKEVGEVFLVYSEFYSPVKQQVLINKILPFTKENKSDNKYIEFNPPVTQFMDEILENYLKATILNCFSNSKASENGSRMTAMNGATDNANDLLDNLDLQFNRLRQSAITQEISEIVGGAEAQR.

This sequence belongs to the ATPase gamma chain family. F-type ATPases have 2 components, CF(1) - the catalytic core - and CF(0) - the membrane proton channel. CF(1) has five subunits: alpha(3), beta(3), gamma(1), delta(1), epsilon(1). CF(0) has three main subunits: a, b and c.

The protein resides in the cell membrane. Its function is as follows. Produces ATP from ADP in the presence of a proton gradient across the membrane. The gamma chain is believed to be important in regulating ATPase activity and the flow of protons through the CF(0) complex. The polypeptide is ATP synthase gamma chain (Clostridium botulinum (strain Langeland / NCTC 10281 / Type F)).